Reading from the N-terminus, the 201-residue chain is Recombination protein RecR (201 aa).

The C4-type zinc-finger motif lies at 60–75 (CSRCGNVDTVDPCTVC). In terms of domain architecture, Toprim spans 83–178 (SVIIVVEDVS…KITRLAHGVP (96 aa)).

Belongs to the RecR family.

Its function is as follows. May play a role in DNA repair. It seems to be involved in an RecBC-independent recombinational process of DNA repair. It may act with RecF and RecO. The polypeptide is Recombination protein RecR (Rhizobium etli (strain ATCC 51251 / DSM 11541 / JCM 21823 / NBRC 15573 / CFN 42)).